The primary structure comprises 233 residues: Purine nucleoside phosphorylase DeoD-type (233 aa).

His4 is a binding site for a purine D-ribonucleoside. Residues Gly20, Arg24, Arg43, and 87–90 (RIGT) contribute to the phosphate site. Residues 179 to 181 (EME) and 203 to 204 (SD) contribute to the a purine D-ribonucleoside site. The Proton donor role is filled by Asp204.

The protein belongs to the PNP/UDP phosphorylase family. Homohexamer; trimer of homodimers.

It catalyses the reaction a purine D-ribonucleoside + phosphate = a purine nucleobase + alpha-D-ribose 1-phosphate. It carries out the reaction a purine 2'-deoxy-D-ribonucleoside + phosphate = a purine nucleobase + 2-deoxy-alpha-D-ribose 1-phosphate. Its function is as follows. Catalyzes the reversible phosphorolytic breakdown of the N-glycosidic bond in the beta-(deoxy)ribonucleoside molecules, with the formation of the corresponding free purine bases and pentose-1-phosphate. The chain is Purine nucleoside phosphorylase DeoD-type from Helicobacter pylori (strain P12).